The chain runs to 635 residues: Threonine--tRNA ligase (635 aa).

In terms of domain architecture, TGS spans 1 to 61 (MIAITLPDGS…DRDVALAIIT (61 aa)). The segment at 242-533 (DHRKLGKSLD…LLENHAGALP (292 aa)) is catalytic. 3 residues coordinate Zn(2+): C333, H384, and H510.

The protein belongs to the class-II aminoacyl-tRNA synthetase family. In terms of assembly, homodimer. It depends on Zn(2+) as a cofactor.

Its subcellular location is the cytoplasm. It catalyses the reaction tRNA(Thr) + L-threonine + ATP = L-threonyl-tRNA(Thr) + AMP + diphosphate + H(+). In terms of biological role, catalyzes the attachment of threonine to tRNA(Thr) in a two-step reaction: L-threonine is first activated by ATP to form Thr-AMP and then transferred to the acceptor end of tRNA(Thr). Also edits incorrectly charged L-seryl-tRNA(Thr). In Cupriavidus pinatubonensis (strain JMP 134 / LMG 1197) (Cupriavidus necator (strain JMP 134)), this protein is Threonine--tRNA ligase.